The chain runs to 48 residues: MHNFKSTPPADSLSDDFTSCSEWCRKMWEETFDDAYIKLYELWKSRGQ.

This is Protein 1.8 from Escherichia coli (Bacteriophage T7).